The following is a 395-amino-acid chain: Multidrug resistance protein MdtL (395 aa).

A run of 12 helical transmembrane segments spans residues 4–24 (FLLC…MYLV), 42–62 (IAFS…GKIA), 69–89 (PVAI…SRAS), 93–113 (LFLS…VVAF), 131–151 (LLNG…HLIM), 158–178 (SLFY…LFIL), 217–237 (VSVI…VMGF), 247–267 (ALTA…LGLF), 271–291 (TLML…SLAH), 295–315 (VTLF…GVAM), 328–350 (VASS…LAAI), and 355–377 (AMNM…IFSV).

This sequence belongs to the major facilitator superfamily. DHA1 family. MdtL (TC 2.A.1.2.22) subfamily.

Its subcellular location is the cell inner membrane. The chain is Multidrug resistance protein MdtL from Salmonella newport (strain SL254).